A 142-amino-acid chain; its full sequence is MKTFTAKPSDIKRQWLLIDATDKTLGRLASEVAMILRGKNKPEYTPSMDTGDYVVIINAEKVAVTGNKRKGKIYHHHTGYIGGIKSISFEKLIATHPERAIEKAVKGMLPRSPLGRAMYKKLKVYAGENHPHTAQQPQAHNI.

The protein belongs to the universal ribosomal protein uL13 family. In terms of assembly, part of the 50S ribosomal subunit.

This protein is one of the early assembly proteins of the 50S ribosomal subunit, although it is not seen to bind rRNA by itself. It is important during the early stages of 50S assembly. This Francisella philomiragia subsp. philomiragia (strain ATCC 25017 / CCUG 19701 / FSC 153 / O#319-036) protein is Large ribosomal subunit protein uL13.